The primary structure comprises 274 residues: Large ribosomal subunit protein uL2 (274 aa).

The interval 223 to 274 (VAMNPVDHPHGGGEGRTSGGRHPVTPWGVPTKGYKTRSNKRTDKYIVRRRNK) is disordered.

Belongs to the universal ribosomal protein uL2 family. Part of the 50S ribosomal subunit. Forms a bridge to the 30S subunit in the 70S ribosome.

In terms of biological role, one of the primary rRNA binding proteins. Required for association of the 30S and 50S subunits to form the 70S ribosome, for tRNA binding and peptide bond formation. It has been suggested to have peptidyltransferase activity; this is somewhat controversial. Makes several contacts with the 16S rRNA in the 70S ribosome. This is Large ribosomal subunit protein uL2 from Shewanella sp. (strain ANA-3).